A 125-amino-acid polypeptide reads, in one-letter code: Small ribosomal subunit protein mS41 (125 aa).

The N-terminal 23 residues, 1-23, are a transit peptide targeting the mitochondrion; sequence MLFRRLFSSSVIVQAASKTSLRK.

This sequence belongs to the mitochondrion-specific ribosomal protein mS41 family.

The protein resides in the mitochondrion. Its function is as follows. Involved in telomere length regulation. This chain is Small ribosomal subunit protein mS41 (FYV4), found in Kluyveromyces lactis (strain ATCC 8585 / CBS 2359 / DSM 70799 / NBRC 1267 / NRRL Y-1140 / WM37) (Yeast).